The primary structure comprises 202 residues: Large ribosomal subunit protein uL18 (202 aa).

Belongs to the universal ribosomal protein uL18 family. As to quaternary structure, part of the 50S ribosomal subunit. Contacts the 5S and 23S rRNAs.

This is one of the proteins that bind and probably mediate the attachment of the 5S RNA into the large ribosomal subunit, where it forms part of the central protuberance. This is Large ribosomal subunit protein uL18 from Staphylothermus marinus (strain ATCC 43588 / DSM 3639 / JCM 9404 / F1).